A 126-amino-acid polypeptide reads, in one-letter code: Fluoride-specific ion channel FluC (126 aa).

The next 4 helical transmembrane spans lie at 4–24, 33–53, 67–87, and 97–117; these read PLLS…LLGL, IPLG…FAMA, FVIT…IEIV, and MAML…CLGL. Positions 74 and 77 each coordinate Na(+).

It belongs to the fluoride channel Fluc/FEX (TC 1.A.43) family.

The protein resides in the cell inner membrane. The enzyme catalyses fluoride(in) = fluoride(out). Na(+) is not transported, but it plays an essential structural role and its presence is essential for fluoride channel function. Its function is as follows. Fluoride-specific ion channel. Important for reducing fluoride concentration in the cell, thus reducing its toxicity. This Acinetobacter baumannii (strain ACICU) protein is Fluoride-specific ion channel FluC.